The sequence spans 445 residues: Chromosomal replication initiator protein DnaA (445 aa).

The segment at 1 to 69 (MEKIWLEAQS…IEAISSLTNI (69 aa)) is domain I, interacts with DnaA modulators. The domain II stretch occupies residues 69 to 108 (IKYQVDFKITEKSQVEKKKVDLQATEKIENDSTRNVDFNT). The tract at residues 109 to 325 (NLNPKYTFDS…GMLIRLGAYA (217 aa)) is domain III, AAA+ region. ATP contacts are provided by Gly-153, Gly-155, Lys-156, and Thr-157. The interval 326–445 (SLTGSEISLN…VEKMKKELMS (120 aa)) is domain IV, binds dsDNA.

This sequence belongs to the DnaA family. As to quaternary structure, oligomerizes as a right-handed, spiral filament on DNA at oriC.

The protein resides in the cytoplasm. Plays an essential role in the initiation and regulation of chromosomal replication. ATP-DnaA binds to the origin of replication (oriC) to initiate formation of the DNA replication initiation complex once per cell cycle. Binds the DnaA box (a 9 base pair repeat at the origin) and separates the double-stranded (ds)DNA. Forms a right-handed helical filament on oriC DNA; dsDNA binds to the exterior of the filament while single-stranded (ss)DNA is stabiized in the filament's interior. The ATP-DnaA-oriC complex binds and stabilizes one strand of the AT-rich DNA unwinding element (DUE), permitting loading of DNA polymerase. After initiation quickly degrades to an ADP-DnaA complex that is not apt for DNA replication. Binds acidic phospholipids. This Geotalea daltonii (strain DSM 22248 / JCM 15807 / FRC-32) (Geobacter daltonii) protein is Chromosomal replication initiator protein DnaA.